We begin with the raw amino-acid sequence, 133 residues long: uncharacterized protein (133 aa).

This is an uncharacterized protein from Escherichia coli O157:H7.